A 160-amino-acid polypeptide reads, in one-letter code: Cytochrome b6-f complex subunit 4 (160 aa).

Helical transmembrane passes span 36 to 56, 95 to 115, and 128 to 148; these read LLYI…GLAV, LLGI…PFIE, and IAMA…IGAC.

It belongs to the cytochrome b family. PetD subfamily. The 4 large subunits of the cytochrome b6-f complex are cytochrome b6, subunit IV (17 kDa polypeptide, PetD), cytochrome f and the Rieske protein, while the 4 small subunits are PetG, PetL, PetM and PetN. The complex functions as a dimer.

The protein localises to the cellular thylakoid membrane. Functionally, component of the cytochrome b6-f complex, which mediates electron transfer between photosystem II (PSII) and photosystem I (PSI), cyclic electron flow around PSI, and state transitions. The polypeptide is Cytochrome b6-f complex subunit 4 (Prochlorococcus marinus (strain MIT 9313)).